The chain runs to 378 residues: Protein RecA (378 aa).

65-72 (GPESSGKT) lines the ATP pocket. The disordered stretch occupies residues 325–378 (AYGMDQTGEEDDQADDKSKDKATKPSDKSQAQAKPKKPVATETSLDLDDSKTDK). Over residues 339 to 351 (DDKSKDKATKPSD) the composition is skewed to basic and acidic residues.

The protein belongs to the RecA family.

It localises to the cytoplasm. Can catalyze the hydrolysis of ATP in the presence of single-stranded DNA, the ATP-dependent uptake of single-stranded DNA by duplex DNA, and the ATP-dependent hybridization of homologous single-stranded DNAs. It interacts with LexA causing its activation and leading to its autocatalytic cleavage. This is Protein RecA from Lactiplantibacillus pentosus (Lactobacillus pentosus).